The sequence spans 451 residues: Bifunctional protein GlmU (451 aa).

Residues 1–225 (MLEIIILAAG…EYEVLGVNNR (225 aa)) are pyrophosphorylase. Residues 7–10 (LAAG), Lys-21, Gln-72, 77–78 (GT), 99–101 (YGD), Gly-136, Glu-150, Asn-165, and Asn-223 each bind UDP-N-acetyl-alpha-D-glucosamine. Asp-101 lines the Mg(2+) pocket. Asn-223 is a Mg(2+) binding site. The interval 226-246 (LQQAELERIFQRQVAEELMVA) is linker. The N-acetyltransferase stretch occupies residues 247 to 451 (GATLLDPARL…IKGWARPVKK (205 aa)). UDP-N-acetyl-alpha-D-glucosamine is bound by residues Arg-329 and Lys-347. His-359 acts as the Proton acceptor in catalysis. UDP-N-acetyl-alpha-D-glucosamine-binding residues include Tyr-362 and Asn-373. Residues Ala-376, 382–383 (NY), Ser-401, Ala-419, and Arg-436 each bind acetyl-CoA.

The protein in the N-terminal section; belongs to the N-acetylglucosamine-1-phosphate uridyltransferase family. It in the C-terminal section; belongs to the transferase hexapeptide repeat family. As to quaternary structure, homotrimer. It depends on Mg(2+) as a cofactor.

The protein localises to the cytoplasm. It catalyses the reaction alpha-D-glucosamine 1-phosphate + acetyl-CoA = N-acetyl-alpha-D-glucosamine 1-phosphate + CoA + H(+). The catalysed reaction is N-acetyl-alpha-D-glucosamine 1-phosphate + UTP + H(+) = UDP-N-acetyl-alpha-D-glucosamine + diphosphate. It participates in nucleotide-sugar biosynthesis; UDP-N-acetyl-alpha-D-glucosamine biosynthesis; N-acetyl-alpha-D-glucosamine 1-phosphate from alpha-D-glucosamine 6-phosphate (route II): step 2/2. The protein operates within nucleotide-sugar biosynthesis; UDP-N-acetyl-alpha-D-glucosamine biosynthesis; UDP-N-acetyl-alpha-D-glucosamine from N-acetyl-alpha-D-glucosamine 1-phosphate: step 1/1. Its pathway is bacterial outer membrane biogenesis; LPS lipid A biosynthesis. Functionally, catalyzes the last two sequential reactions in the de novo biosynthetic pathway for UDP-N-acetylglucosamine (UDP-GlcNAc). The C-terminal domain catalyzes the transfer of acetyl group from acetyl coenzyme A to glucosamine-1-phosphate (GlcN-1-P) to produce N-acetylglucosamine-1-phosphate (GlcNAc-1-P), which is converted into UDP-GlcNAc by the transfer of uridine 5-monophosphate (from uridine 5-triphosphate), a reaction catalyzed by the N-terminal domain. The chain is Bifunctional protein GlmU from Saccharophagus degradans (strain 2-40 / ATCC 43961 / DSM 17024).